The chain runs to 323 residues: MSTTKALSLLVFILFVSLVHSSDQCPINSIYQFGDSISDTGNLIRNGPASSPTPKPLPQREHNVFVNFGVSGSTALNSSFFSERNLHVPATNTPLSMQLAWFKGHLRSTCHGSSSDCLKHSLFMVGEIGGNDYNYGFFQGKPMEEIRSYIPHVVGAITAAAREVIRAGAVNVVVPGNFPVGCFPIYLTSFPVKDTKDYDDNGCLTHLNEFAMDHNNQLQEAIASLRKEFPDVAIVYGDYYNAFQYVLRSERFDKSVALKSCCGTGGAYNYDGKRPYGAVGVPVCQNPHKFISWDGVHLTQKAYRFMSKFLNNQILSQIKCTRA.

Positions Met-1 to Ser-21 are cleaved as a signal peptide. The active-site Nucleophile is Ser-36. Asn-77 is a glycosylation site (N-linked (GlcNAc...) asparagine). Catalysis depends on residues Asp-294 and His-297.

The protein belongs to the 'GDSL' lipolytic enzyme family.

The protein resides in the secreted. This is GDSL esterase/lipase At5g03980 from Arabidopsis thaliana (Mouse-ear cress).